The primary structure comprises 117 residues: MHILDSVDAASLRNDVPEFRAGDTLKVHVNIIEGKNSRVQVFQGFVLGRQGDGVRETFTVRKVSFGVGVERTFPVHSPIIDKIEVVTKGDVRRAKLYYMRALRGKAAKIKEKRDFAK.

This sequence belongs to the bacterial ribosomal protein bL19 family.

Its function is as follows. This protein is located at the 30S-50S ribosomal subunit interface and may play a role in the structure and function of the aminoacyl-tRNA binding site. In Paenarthrobacter aurescens (strain TC1), this protein is Large ribosomal subunit protein bL19.